A 772-amino-acid polypeptide reads, in one-letter code: Heat shock protein 88 (772 aa).

Disordered regions lie at residues 496-519 (TAAP…AEEK) and 729-772 (LGKP…DILD). Low complexity predominate over residues 497 to 513 (AAPAETPAETPANGEAA). Residues 735-772 (KPVEVPKEEPKDTPMESKDAPAEEPVATKDQKMDDILD) are compositionally biased toward basic and acidic residues.

The protein belongs to the heat shock protein 70 family.

Its function is as follows. May function in protein folding and assembly, and disassembly of protein complexes. The polypeptide is Heat shock protein 88 (hspH) (Dictyostelium discoideum (Social amoeba)).